An 88-amino-acid chain; its full sequence is Small ribosomal subunit protein bS16 (88 aa).

It belongs to the bacterial ribosomal protein bS16 family.

This Anaeromyxobacter sp. (strain K) protein is Small ribosomal subunit protein bS16.